A 571-amino-acid chain; its full sequence is FAD-binding monooxygenase VdtE (571 aa).

Residues 44-47, 56-57, and Tyr62 contribute to the FAD site; these read VWYW and DS. 54–56 is a binding site for NADP(+); the sequence is RVD. NADP(+) contacts are provided by residues 187–193 and 210–211; these read TGASAVQ and RT.

The protein belongs to the FAD-binding monooxygenase family. FAD is required as a cofactor.

It catalyses the reaction 9,10-dihydroxy-7-methoxy-3-(2-oxopropyl)-1H-benzo[g]isochromen-1-one + NADPH + O2 + H(+) = methyl 2-[(3S)-9,10-dihydroxy-7-methoxy-1-oxo-1H,3H,4H-naphtho[2,3-c]pyran-3-yl]acetate + NADP(+) + H2O. The catalysed reaction is (3S)-9,10-dihydroxy-7-methoxy-3-(2-oxopropyl)-1H,3H,4H-naphtho[2,3-c]pyran-1-one + NADPH + O2 + H(+) = semiviriditoxin + NADP(+) + H2O. Its pathway is secondary metabolite biosynthesis. In terms of biological role, FAD-binding monooxygenase; part of the gene cluster that mediates the biosynthesis of viriditoxin, one of the 'classical' secondary metabolites produced by fungi and that has antibacterial activity. The first step is performed by the polyketide synthase VdtA which condenses one acetyl-CoA and 6 malonyl-CoA units to form the heptaketide monomer backbone of viriditoxin. The product of VdtA is then O-methylated on C7 by the O-methyltransferase VdtC. The O-methyl group is important for the stereoselective coupling of the monomers at the final step of viriditoxin biosynthesis. The short-chain dehydrogenase/reductase VdtF then acts as a stereospecific reductase converting the pyrone to dihydropyrone via the reduction of the C3-C4 double bond. The FAD-binding monooxygenase VdtE then converts the ketone group into a methyl-ester group to yield semi-viriditoxin. Finally, the laccase VdtB is involved in dimerization of 2 semi-viriditoxin molecules to yield the final viriditoxin. VdtB is responsible for the regioselective 6,6'-coupling of semi-viriditoxin, which yields (M)-viriditoxin and (P)-viriditoxin at a ratio of 1:2. The non-catalytic carboxylesterase-like protein VdtD affects the stereochemistical outcome of the coupling. The highly reducing polyketide synthase VdtX is not involved in viriditoxin synthesis, but might possibly play a role in the production of additional metabolites not identified yet. The protein is FAD-binding monooxygenase VdtE of Byssochlamys spectabilis (Paecilomyces variotii).